A 525-amino-acid chain; its full sequence is Phosphoenolpyruvate carboxykinase (ATP) (525 aa).

Residues Arg-52, Tyr-186, and Lys-192 each contribute to the substrate site. Residues Lys-192, His-211, and 228-236 (GLSGTGKTT) each bind ATP. Lys-192 and His-211 together coordinate Mn(2+). Asp-249 lines the Mn(2+) pocket. ATP-binding positions include Glu-277, Arg-314, 433–434 (RI), and Thr-439. Arg-314 lines the substrate pocket.

This sequence belongs to the phosphoenolpyruvate carboxykinase (ATP) family. Mn(2+) serves as cofactor.

The protein resides in the cytoplasm. The catalysed reaction is oxaloacetate + ATP = phosphoenolpyruvate + ADP + CO2. The protein operates within carbohydrate biosynthesis; gluconeogenesis. Involved in the gluconeogenesis. Catalyzes the conversion of oxaloacetate (OAA) to phosphoenolpyruvate (PEP) through direct phosphoryl transfer between the nucleoside triphosphate and OAA. This is Phosphoenolpyruvate carboxykinase (ATP) from Fusobacterium nucleatum subsp. nucleatum (strain ATCC 25586 / DSM 15643 / BCRC 10681 / CIP 101130 / JCM 8532 / KCTC 2640 / LMG 13131 / VPI 4355).